We begin with the raw amino-acid sequence, 374 residues long: O-methyltransferase acrG (374 aa).

Residues Tyr-19, Asn-70, Asp-96, Ser-128, and Phe-129 each contribute to the S-adenosyl-L-homocysteine site. Phe-245 lines the Mg(2+) pocket.

This sequence belongs to the methyltransferase superfamily. Type-7 methyltransferase family.

It functions in the pathway secondary metabolite biosynthesis. O-methyltransferase; part of the cluster that mediates the biosynthesis of acurin A, a highly reduced polyketide coupled to a serine via a peptide bond. The activities of the highly reducing polyketide synthase acrA and the nonribosomal peptide synthetase acrB are collectively responsible for the synthesis of the acurin A core structure with a heptaketide backbone produced by acrA covalently fused to a L-serine by acrB. After the formation of the PK-NRP hybrid product, it is detached from acrB by reductive release to set up the formation of the lactam ring by aldol condensation. The hydrolyase acrC then catalyzes water loss to generate a double bond in the ring. This double bond is probably reduced, which is followed by three oxidations at C-22 to generate the carboxylic acid moiety, involving probably the FAD-binding monooxygenase acrE and the cytochrome P450 monooxygenases acrD and acrF. Finally, a last methylation step performed by the O-methyltransferase acrG leads to the production of acurin A. In Aspergillus aculeatus (strain ATCC 16872 / CBS 172.66 / WB 5094), this protein is O-methyltransferase acrG.